The chain runs to 74 residues: Putative defensin-like protein 36 (74 aa).

A signal peptide spans 1–22 (MASNKVSFFLVLCLCILLAGEC). 3 disulfide bridges follow: cysteine 33/cysteine 59, cysteine 45/cysteine 69, and cysteine 49/cysteine 71.

It belongs to the DEFL family.

It is found in the secreted. This chain is Putative defensin-like protein 36, found in Arabidopsis thaliana (Mouse-ear cress).